The chain runs to 255 residues: 5'-nucleotidase SurE (255 aa).

The a divalent metal cation site is built by Asp8, Asp9, Ser39, and Asn91.

The protein belongs to the SurE nucleotidase family. Requires a divalent metal cation as cofactor.

Its subcellular location is the cytoplasm. It catalyses the reaction a ribonucleoside 5'-phosphate + H2O = a ribonucleoside + phosphate. Nucleotidase that shows phosphatase activity on nucleoside 5'-monophosphates. The chain is 5'-nucleotidase SurE from Nitrosospira multiformis (strain ATCC 25196 / NCIMB 11849 / C 71).